The sequence spans 256 residues: Imidazole glycerol phosphate synthase subunit HisF (256 aa).

Residues D12 and D131 contribute to the active site.

The protein belongs to the HisA/HisF family. As to quaternary structure, heterodimer of HisH and HisF.

The protein localises to the cytoplasm. It catalyses the reaction 5-[(5-phospho-1-deoxy-D-ribulos-1-ylimino)methylamino]-1-(5-phospho-beta-D-ribosyl)imidazole-4-carboxamide + L-glutamine = D-erythro-1-(imidazol-4-yl)glycerol 3-phosphate + 5-amino-1-(5-phospho-beta-D-ribosyl)imidazole-4-carboxamide + L-glutamate + H(+). The protein operates within amino-acid biosynthesis; L-histidine biosynthesis; L-histidine from 5-phospho-alpha-D-ribose 1-diphosphate: step 5/9. Its function is as follows. IGPS catalyzes the conversion of PRFAR and glutamine to IGP, AICAR and glutamate. The HisF subunit catalyzes the cyclization activity that produces IGP and AICAR from PRFAR using the ammonia provided by the HisH subunit. The protein is Imidazole glycerol phosphate synthase subunit HisF of Ectopseudomonas mendocina (strain ymp) (Pseudomonas mendocina).